The sequence spans 534 residues: GMP synthase [glutamine-hydrolyzing] (534 aa).

A Glutamine amidotransferase type-1 domain is found at 4-202 (KILILDFGSQ…VLEIAKAQPD (199 aa)). Cys81 acts as the Nucleophile in catalysis. Residues His176 and Glu178 contribute to the active site. One can recognise a GMPS ATP-PPase domain in the interval 203–402 (WVMKDHVAEA…LGLPHDMVYR (200 aa)). 230-236 (SGGVDSS) lines the ATP pocket.

Homodimer.

The enzyme catalyses XMP + L-glutamine + ATP + H2O = GMP + L-glutamate + AMP + diphosphate + 2 H(+). Its pathway is purine metabolism; GMP biosynthesis; GMP from XMP (L-Gln route): step 1/1. Its function is as follows. Catalyzes the synthesis of GMP from XMP. This chain is GMP synthase [glutamine-hydrolyzing], found in Methylibium petroleiphilum (strain ATCC BAA-1232 / LMG 22953 / PM1).